The sequence spans 549 residues: Plant intracellular Ras-group-related LRR protein 4 (549 aa).

The span at 119-140 (SPSSNGSVSSRPPLPPATTTAA) shows a compositional bias: low complexity. Residues 119 to 167 (SPSSNGSVSSRPPLPPATTTAARSDSQSSLNFSERAPVRPKDMVSRDDS) form a disordered region. The segment covering 141–150 (RSDSQSSLNF) has biased composition (polar residues). The span at 154-167 (APVRPKDMVSRDDS) shows a compositional bias: basic and acidic residues. Ser167 carries the phosphoserine modification. LRR repeat units lie at residues 245-268 (LSSL…IGGL), 269-291 (SSLT…IGEL), 293-313 (NLVY…AFSR), 314-337 (LVRL…IGSL), 339-360 (SLKK…IGGC), 362-383 (SLIE…IGKI), 384-406 (TTLE…MSSL), 407-430 (ASLK…CFAT), 432-454 (LVKL…IGNL), 455-476 (EMLE…SFKM), and 478-500 (TKLR…IAEK). The GVYW; degenerate signature appears at 501 to 508 (GPQAVVQY).

This sequence belongs to the SHOC2 family. Widely expressed.

Leucine-rich repeat protein that likely mediates protein interactions, possibly in the context of signal transduction. The polypeptide is Plant intracellular Ras-group-related LRR protein 4 (PIRL4) (Arabidopsis thaliana (Mouse-ear cress)).